The chain runs to 319 residues: Probable cell division protein WhiA (319 aa).

Residues 277–310 constitute a DNA-binding region (H-T-H motif); it reads SLEELGKLAEPAMTKDAIAGRIRRLLCLADKRAK.

Belongs to the WhiA family.

Involved in cell division and chromosome segregation. The chain is Probable cell division protein WhiA from Tropheryma whipplei (strain Twist) (Whipple's bacillus).